Reading from the N-terminus, the 255-residue chain is Probable transcriptional regulatory protein CMM_1817 (255 aa).

Belongs to the TACO1 family.

Its subcellular location is the cytoplasm. The chain is Probable transcriptional regulatory protein CMM_1817 from Clavibacter michiganensis subsp. michiganensis (strain NCPPB 382).